The chain runs to 629 residues: tRNA uridine 5-carboxymethylaminomethyl modification enzyme MnmG (629 aa).

FAD contacts are provided by residues 13-18 (GGGHAG), Val125, and Ser180. Residue 273-287 (GPRYCPSIEDKVMRF) participates in NAD(+) binding. FAD is bound at residue Gln370.

It belongs to the MnmG family. In terms of assembly, homodimer. Heterotetramer of two MnmE and two MnmG subunits. FAD serves as cofactor.

The protein resides in the cytoplasm. NAD-binding protein involved in the addition of a carboxymethylaminomethyl (cmnm) group at the wobble position (U34) of certain tRNAs, forming tRNA-cmnm(5)s(2)U34. The protein is tRNA uridine 5-carboxymethylaminomethyl modification enzyme MnmG of Pasteurella multocida (strain Pm70).